Consider the following 784-residue polypeptide: MLAMKDKPWLLLFGLLAALSCLASFGDAAYPYYGTKIGALTRLHHGVSGDVYAVDSRTIFIKKFNYDGEAPAAYFYVGNTARPSNEGAARLRDERGGTASLTRRYRNKDVTLSLPEGKTLRDIKWFSVWCDEFAVNFGDVSIPPNLDFPRPQKISALRGVHGVSSDNIVIVDAQTLLVPNFSYDGEAPDAKFWVGRGQRPTSDGLRIPDENGKENPLRRYERKTIVLTLPEDLTIFDIGHFGVWCEAFTVDFGHVRLPEGLNVPPSLKMLGISPQSKLNCEVLYDDLAFEVRWAVAGESIVVQLVAKLEPNHYMSFGISPNKNISQMIGADAVVAWVDPQTGNGFATDYFLEGKAQCSGGRGACPDTKISEKTNSIRLLNAAMVNGYSIVTYQRSLAATDRLDLPISITGAESVVWAIGPLNDYQEVSFHTFYNKHLHQIEFGRQPKWNCPLPEGARGNSNSSEQEDSAPAAQSSTGGAGYPPAGRPNVEPDEEFYENRAEALHRQPPQRRQETAIITQRRPVPTPKPVNSNGAWDIPAIQCHEPEDGVFYAQMGPTGGKHGYPAITGHVGWGISWYINGLLIPEIHVVRGKTYTFVVEGGNNPDIPAKYHPFYISDDPVGGYEHKREEEKKAVRIYAGVHRSRSGQVTPTGVGRLCNWTPDVEGPPADDYQSFGAYQRTLTLKCDAGEPGVITWKPDRNTPDTVYYHCFTHRYLGWKIHVHDSCDSEAGGLKGAASERHEIRLPAKATVAEPAPVHEDYAGEASVRHETKMASALLRLSRRAY.

The signal sequence occupies residues 1-28 (MLAMKDKPWLLLFGLLAALSCLASFGDA). DM13 domains are found at residues 34 to 143 (GTKI…VSIP) and 151 to 258 (PQKI…VRLP). Residues 287–419 (LAFEVRWAVA…GAESVVWAIG (133 aa)) enclose the DOMON domain. The segment at 451–491 (PLPEGARGNSNSSEQEDSAPAAQSSTGGAGYPPAGRPNVEP) is disordered.

Interacts with Chro and Mgtor as part of a macromolecular complex forming the spindle matrix. Chro colocalizes with Skeletor (Skel) on the chromosomes at interphase and on spindle during metaphase.

The protein resides in the cytoplasm. Its subcellular location is the cytoskeleton. The protein localises to the spindle. It localises to the nucleus. It is found in the nucleolus. The protein resides in the chromosome. Functionally, provides structural support to stabilize and organize the microtubule spindle during mitosis (within embryonic somatic cells) and meiosis (within spermatocytes). The role in mitosis regulation depends on the Ran pathway. This Drosophila melanogaster (Fruit fly) protein is Protein Skeletor, isoforms B/C.